The chain runs to 107 residues: U1-lycotoxin-Ls1m (107 aa).

The first 20 residues, 1–20 (MMKVLVVVALLVTLISYSSS), serve as a signal peptide directing secretion. A propeptide spanning residues 21–41 (EGIDDLEADELLSLMANEQTR) is cleaved from the precursor. Intrachain disulfides connect Cys-44-Cys-59, Cys-51-Cys-68, Cys-58-Cys-86, and Cys-70-Cys-84.

It belongs to the neurotoxin 19 (CSTX) family. 04 (U1-Lctx) subfamily. As to expression, expressed by the venom gland.

It is found in the secreted. The sequence is that of U1-lycotoxin-Ls1m from Lycosa singoriensis (Wolf spider).